We begin with the raw amino-acid sequence, 72 residues long: MAKDDVIEIDGNVVEALPNATFKVELDNKHVILCHIAGKMRMHYIKIMPGDRVKVELTPYSLDKGRITYRYK.

The S1-like domain maps to 1-72 (MAKDDVIEID…DKGRITYRYK (72 aa)).

The protein belongs to the IF-1 family. As to quaternary structure, component of the 30S ribosomal translation pre-initiation complex which assembles on the 30S ribosome in the order IF-2 and IF-3, IF-1 and N-formylmethionyl-tRNA(fMet); mRNA recruitment can occur at any time during PIC assembly.

The protein resides in the cytoplasm. In terms of biological role, one of the essential components for the initiation of protein synthesis. Stabilizes the binding of IF-2 and IF-3 on the 30S subunit to which N-formylmethionyl-tRNA(fMet) subsequently binds. Helps modulate mRNA selection, yielding the 30S pre-initiation complex (PIC). Upon addition of the 50S ribosomal subunit IF-1, IF-2 and IF-3 are released leaving the mature 70S translation initiation complex. The polypeptide is Translation initiation factor IF-1 (Campylobacter curvus (strain 525.92)).